The chain runs to 363 residues: Zinc phosphodiesterase ELAC protein 1 (363 aa).

Zn(2+) is bound by residues histidine 62, histidine 64, aspartate 66, histidine 67, histidine 182, aspartate 253, and histidine 313. The active-site Proton acceptor is aspartate 66.

It belongs to the RNase Z family. As to quaternary structure, homodimer. Requires Zn(2+) as cofactor.

The protein localises to the cytoplasm. Its subcellular location is the cytosol. The protein resides in the nucleus. It carries out the reaction Endonucleolytic cleavage of RNA, removing extra 3' nucleotides from tRNA precursor, generating 3' termini of tRNAs. A 3'-hydroxy group is left at the tRNA terminus and a 5'-phosphoryl group is left at the trailer molecule.. Functionally, zinc phosphodiesterase, which displays some tRNA 3'-processing endonuclease activity. Specifically involved in tRNA repair: acts downstream of the ribosome-associated quality control (RQC) pathway by removing a 2',3'-cyclic phosphate from tRNAs following cleavage by ANKZF1. tRNAs are then processed by TRNT1. The protein is Zinc phosphodiesterase ELAC protein 1 (ELAC1) of Bos taurus (Bovine).